We begin with the raw amino-acid sequence, 440 residues long: Guanine/hypoxanthine permease PbuG (440 aa).

Transmembrane regions (helical) follow at residues 18–38 (IIGGLTTFLSMAYILFVNPIT), 57–77 (AVFTATALASAAGCILMGLIA), 81–101 (IAIAPGMGLNAFFAFSVVLGM), 107–127 (AALSGVFISGLIFVALSLTGF), 142–162 (AVGAGIGLFITFVGLQGSGII), 175–195 (IHSGPVLLTIFGVIVTVILMV), 201–221 (GVFIGMLLTAVAGMIFGLVPV), 251–271 (MLIVILTFLFVGFFDTAGTLV), 291–311 (ALLADSSSIVIGAVLGTSTTT), 327–347 (GFAAIVTGILFLLATFFSPLL), 354–374 (VTAPALIIVGALMVAPLGKIA), 388–408 (MIMMPLTYSIATGIAIGFIFY), and 419–439 (KEVHPIMYGLFVVFILYFIFL).

This sequence belongs to the nucleobase:cation symporter-2 (NCS2) (TC 2.A.40) family. Azg-like subfamily.

It is found in the cell membrane. Its function is as follows. Involved in the uptake of the purine bases hypoxanthine and guanine. This Bacillus subtilis (strain 168) protein is Guanine/hypoxanthine permease PbuG (pbuG).